The primary structure comprises 102 residues: Complement inhibitor RaCI6 (102 aa).

A signal peptide spans 1–24 (MAALNGLVLLLLTISAMFISECYS). 2 disulfides stabilise this stretch: Cys-37/Cys-61 and Cys-42/Cys-63.

Belongs to the RaCI family. Expressed in salivary glands.

The protein resides in the secreted. In terms of biological role, complement inhibitor. Prevents complement-mediated C5 activation by binding to C5. Binds C5 at a different binding site than the other tick complement inhibitors OmCI and CirpT1, and the drug eculizumab. The protein is Complement inhibitor RaCI6 of Dermacentor andersoni (Rocky mountain wood tick).